We begin with the raw amino-acid sequence, 568 residues long: Potassium-transporting ATPase potassium-binding subunit (568 aa).

Helical transmembrane passes span 7-27, 67-87, 137-157, 180-200, 258-278, 288-308, 332-352, 361-381, 384-404, 421-441, 488-508, and 535-555; these read LLIT…GNII, YALA…TLLV, GLTV…FALI, LYLL…QGVI, FIQI…FGQV, LLWA…YAEL, FGIL…CGAV, ALGG…FGGV, GLYG…LMIG, MVAL…ALTI, LLLA…VLAI, and LLIL…LILG.

The protein belongs to the KdpA family. As to quaternary structure, the system is composed of three essential subunits: KdpA, KdpB and KdpC.

It localises to the cell inner membrane. In terms of biological role, part of the high-affinity ATP-driven potassium transport (or Kdp) system, which catalyzes the hydrolysis of ATP coupled with the electrogenic transport of potassium into the cytoplasm. This subunit binds the periplasmic potassium ions and delivers the ions to the membrane domain of KdpB through an intramembrane tunnel. The sequence is that of Potassium-transporting ATPase potassium-binding subunit from Photorhabdus laumondii subsp. laumondii (strain DSM 15139 / CIP 105565 / TT01) (Photorhabdus luminescens subsp. laumondii).